A 54-amino-acid chain; its full sequence is Ovomucoid (54 aa).

The region spanning 4–54 is the Kazal-like domain; that stretch reads VDCSDYPKPACTLEYMPLCGSDNKTYGNKCNFCNAVVDSNGTLTLSHFGKC. 3 disulfide bridges follow: Cys6-Cys36, Cys14-Cys33, and Cys22-Cys54. Asn43 carries N-linked (GlcNAc...) asparagine glycosylation.

The protein localises to the secreted. The sequence is that of Ovomucoid from Dendrocygna arcuata (Wandering whistling-duck).